Reading from the N-terminus, the 268-residue chain is Hydroxyethylthiazole kinase (268 aa).

Substrate is bound at residue Met49. Lys124 and Thr168 together coordinate ATP. Ala195 provides a ligand contact to substrate.

It belongs to the Thz kinase family. The cofactor is Mg(2+).

The enzyme catalyses 5-(2-hydroxyethyl)-4-methylthiazole + ATP = 4-methyl-5-(2-phosphooxyethyl)-thiazole + ADP + H(+). Its pathway is cofactor biosynthesis; thiamine diphosphate biosynthesis; 4-methyl-5-(2-phosphoethyl)-thiazole from 5-(2-hydroxyethyl)-4-methylthiazole: step 1/1. Its function is as follows. Catalyzes the phosphorylation of the hydroxyl group of 4-methyl-5-beta-hydroxyethylthiazole (THZ). This Archaeoglobus fulgidus (strain ATCC 49558 / DSM 4304 / JCM 9628 / NBRC 100126 / VC-16) protein is Hydroxyethylthiazole kinase.